The sequence spans 374 residues: MCHFNELSIEIESKNLRSAKKIFHCPYEECGKKYSRPSLLEQHLRTHSNERPFVCDYTGCSKAFYRKSHLKIHKRCHTNVKPFSCHYDGCDAQFYTQQHLERHIEVHRKPKPYACTWEGCDECFSKHQQLRSHISACHTHLLPYPCTYQDCELRFATKQKLQNHVNRAHEKIISYSCPHESCVGHEGFEKWSQLQNHIREAHVPSCSICGRQFKTAAHLRHHVVLHQTTLEERKTYHCPMEGCKKSFTRSSALKKHISVIHEGNMAFHCDSCGTKFGYKHMLQRHLERGTCKKAHKPYINECGIKHDGIEGVAIHDQKEKELSSNLVSDVAKKIINEVTGHGYKEAREYSCSFPECNYRFKRLYDMHRHLNSHH.

7 C2H2-type zinc fingers span residues Phe23–His47, Phe53–His77, Phe83–His107, Tyr113–His138, Tyr144–His169, Pro204–His226, and Tyr236–His261. The segment at Phe267–Cys291 adopts a C2H2-type 8; atypical zinc-finger fold. The C2H2-type 9 zinc-finger motif lies at Tyr349–His374.

Its subcellular location is the nucleus. Functionally, is required for correct transcription of 5S RNA genes by RNA polymerase III. Also binds the transcribed 5S RNA's. Initiates transcription of the 5S ribosomal RNA gene. The protein is Transcription factor IIIA (sfc2) of Schizosaccharomyces pombe (strain 972 / ATCC 24843) (Fission yeast).